Consider the following 475-residue polypeptide: Ribulose bisphosphate carboxylase large chain (475 aa).

The propeptide occupies 1-2 (MS). Pro3 carries the N-acetylproline modification. Residue Lys14 is modified to N6,N6,N6-trimethyllysine. Substrate is bound by residues Asn123 and Thr173. Lys175 serves as the catalytic Proton acceptor. Lys177 is a binding site for substrate. Residues Lys201, Asp203, and Glu204 each coordinate Mg(2+). An N6-carboxylysine modification is found at Lys201. Catalysis depends on His294, which acts as the Proton acceptor. Residues Arg295, His327, and Ser379 each contribute to the substrate site.

This sequence belongs to the RuBisCO large chain family. Type I subfamily. As to quaternary structure, heterohexadecamer of 8 large chains and 8 small chains; disulfide-linked. The disulfide link is formed within the large subunit homodimers. Mg(2+) is required as a cofactor. The disulfide bond which can form in the large chain dimeric partners within the hexadecamer appears to be associated with oxidative stress and protein turnover.

The protein localises to the plastid. It is found in the chloroplast. It catalyses the reaction 2 (2R)-3-phosphoglycerate + 2 H(+) = D-ribulose 1,5-bisphosphate + CO2 + H2O. The enzyme catalyses D-ribulose 1,5-bisphosphate + O2 = 2-phosphoglycolate + (2R)-3-phosphoglycerate + 2 H(+). Functionally, ruBisCO catalyzes two reactions: the carboxylation of D-ribulose 1,5-bisphosphate, the primary event in carbon dioxide fixation, as well as the oxidative fragmentation of the pentose substrate in the photorespiration process. Both reactions occur simultaneously and in competition at the same active site. This is Ribulose bisphosphate carboxylase large chain from Pinus pinea (Italian stone pine).